We begin with the raw amino-acid sequence, 81 residues long: Photosystem I iron-sulfur center (81 aa).

4Fe-4S ferredoxin-type domains lie at 2-31 (AHSVKIYDTCIGCTQCVRACPTDVLEMIPW) and 39-68 (IASAPRTEDCVGCKRCESACPTDFLSVRVY). The [4Fe-4S] cluster site is built by C11, C14, C17, C21, C48, C51, C54, and C58.

In terms of assembly, the eukaryotic PSI reaction center is composed of at least 11 subunits. [4Fe-4S] cluster is required as a cofactor.

Its subcellular location is the plastid. The protein localises to the chloroplast thylakoid membrane. The catalysed reaction is reduced [plastocyanin] + hnu + oxidized [2Fe-2S]-[ferredoxin] = oxidized [plastocyanin] + reduced [2Fe-2S]-[ferredoxin]. In terms of biological role, apoprotein for the two 4Fe-4S centers FA and FB of photosystem I (PSI); essential for photochemical activity. FB is the terminal electron acceptor of PSI, donating electrons to ferredoxin. The C-terminus interacts with PsaA/B/D and helps assemble the protein into the PSI complex. Required for binding of PsaD and PsaE to PSI. PSI is a plastocyanin-ferredoxin oxidoreductase, converting photonic excitation into a charge separation, which transfers an electron from the donor P700 chlorophyll pair to the spectroscopically characterized acceptors A0, A1, FX, FA and FB in turn. The protein is Photosystem I iron-sulfur center of Adiantum capillus-veneris (Maidenhair fern).